We begin with the raw amino-acid sequence, 153 residues long: MAFKFENTGERPRTVHHLCEVQETSLLELQLQCVYCKKELSSSEVYNFACKDLRLVYREDSPYAVCNFCLLFYSKVRKIRHYNYSLYGASLVALTKKELFDLLIRCYRCQQPLTPEEKQLHCEYKKRFHRISRTWTGLCLQCWRHTTSTETAV.

2 zinc fingers span residues 33–69 and 106–142; these read CVYC…CNFC and CYRC…CLQC. The PDZ-binding domain motif lies at 151–153; that stretch reads TAV.

This sequence belongs to the papillomaviridae E6 protein family. In terms of assembly, forms homodimers. Interacts with ubiquitin-protein ligase UBE3A/E6-AP and thus forms a complex with human TP53. Interacts with human NFX1 and MAGI3. Interacts with human IRF3; this interaction inhibits the establishment of antiviral state. Interacts with human TYK2; this interaction inhibits JAK-STAT activation by interferon alpha. Interacts with host DLG1; this interaction leads to the proteasomal degradation of DLG1.

The protein resides in the host cytoplasm. Its subcellular location is the host nucleus. Its function is as follows. Plays a major role in the induction and maintenance of cellular transformation. Acts mainly as an oncoprotein by stimulating the destruction of many host cell key regulatory proteins. E6 associates with host UBE3A/E6-AP ubiquitin-protein ligase, and inactivates tumor suppressors TP53 and TP73 by targeting them to the 26S proteasome for degradation. In turn, DNA damage and chromosomal instabilities increase and lead to cell proliferation and cancer development. The complex E6/E6AP targets several other substrates to degradation via the proteasome including host DLG1 or NFX1, a repressor of human telomerase reverse transcriptase (hTERT). The resulting increased expression of hTERT prevents the shortening of telomere length leading to cell immortalization. Other cellular targets including BAK1, Fas-associated death domain-containing protein (FADD) and procaspase 8, are degraded by E6/E6AP causing inhibition of apoptosis. E6 also inhibits immune response by interacting with host IRF3 and TYK2. These interactions prevent IRF3 transcriptional activities and inhibit TYK2-mediated JAK-STAT activation by interferon alpha resulting in inhibition of the interferon signaling pathway. The chain is Protein E6 from Homo sapiens (Human).